The following is a 440-amino-acid chain: Enolase 1 (440 aa).

The substrate site is built by histidine 161 and glutamate 170. The active-site Proton donor is glutamate 213. Residues aspartate 248, glutamate 297, and aspartate 324 each coordinate Mg(2+). Residues glutamate 297 and aspartate 324 each coordinate substrate. Lysine 349 serves as the catalytic Proton acceptor. Residues 376-379 and lysine 400 contribute to the substrate site; that span reads SHRS.

Belongs to the enolase family. As to quaternary structure, homodimer. It depends on Mg(2+) as a cofactor.

It is found in the cytoplasm. It carries out the reaction (2R)-2-phosphoglycerate = phosphoenolpyruvate + H2O. Its pathway is carbohydrate degradation; glycolysis; pyruvate from D-glyceraldehyde 3-phosphate: step 4/5. The chain is Enolase 1 (ENO1) from Candida albicans (strain SC5314 / ATCC MYA-2876) (Yeast).